Here is a 510-residue protein sequence, read N- to C-terminus: NAD(P)H-quinone oxidoreductase subunit 2 A, chloroplastic (510 aa).

A run of 14 helical transmembrane segments spans residues 31–51 (FIFP…IDLT), 59–79 (WFYF…LFRW), 99–119 (IFQF…VEYI), 124–144 (MAIT…MFLC), 149–169 (LITI…LSGY), 184–204 (LLMG…LYGL), 229–249 (ISIA…LAPF), 261–281 (PTPV…ALAT), 295–315 (WHLL…LLAI), 323–343 (MLAY…IVGD), 354–374 (YMLF…LFGL), 395–415 (ALSL…AGFF), 418–438 (LYLF…IGLL), and 484–504 (MTVC…ILAI).

The protein belongs to the complex I subunit 2 family. In terms of assembly, NDH is composed of at least 16 different subunits, 5 of which are encoded in the nucleus.

The protein resides in the plastid. Its subcellular location is the chloroplast thylakoid membrane. The catalysed reaction is a plastoquinone + NADH + (n+1) H(+)(in) = a plastoquinol + NAD(+) + n H(+)(out). The enzyme catalyses a plastoquinone + NADPH + (n+1) H(+)(in) = a plastoquinol + NADP(+) + n H(+)(out). Functionally, NDH shuttles electrons from NAD(P)H:plastoquinone, via FMN and iron-sulfur (Fe-S) centers, to quinones in the photosynthetic chain and possibly in a chloroplast respiratory chain. The immediate electron acceptor for the enzyme in this species is believed to be plastoquinone. Couples the redox reaction to proton translocation, and thus conserves the redox energy in a proton gradient. The polypeptide is NAD(P)H-quinone oxidoreductase subunit 2 A, chloroplastic (Saccharum hybrid (Sugarcane)).